Here is a 315-residue protein sequence, read N- to C-terminus: Acetyl-coenzyme A carboxylase carboxyl transferase subunit alpha (315 aa).

The 255-residue stretch at 38 to 292 (RLQKKSNELT…KLRLKEDLAE (255 aa)) folds into the CoA carboxyltransferase C-terminal domain.

Belongs to the AccA family. As to quaternary structure, acetyl-CoA carboxylase is a heterohexamer composed of biotin carboxyl carrier protein (AccB), biotin carboxylase (AccC) and two subunits each of ACCase subunit alpha (AccA) and ACCase subunit beta (AccD).

It localises to the cytoplasm. It carries out the reaction N(6)-carboxybiotinyl-L-lysyl-[protein] + acetyl-CoA = N(6)-biotinyl-L-lysyl-[protein] + malonyl-CoA. The protein operates within lipid metabolism; malonyl-CoA biosynthesis; malonyl-CoA from acetyl-CoA: step 1/1. Component of the acetyl coenzyme A carboxylase (ACC) complex. First, biotin carboxylase catalyzes the carboxylation of biotin on its carrier protein (BCCP) and then the CO(2) group is transferred by the carboxyltransferase to acetyl-CoA to form malonyl-CoA. The sequence is that of Acetyl-coenzyme A carboxylase carboxyl transferase subunit alpha from Haemophilus influenzae (strain 86-028NP).